We begin with the raw amino-acid sequence, 87 residues long: Toxin Cll5b (87 aa).

The first 19 residues, 1–19 (MNSLLMITACLAEIGTVWA), serve as a signal peptide directing secretion. The LCN-type CS-alpha/beta domain occupies 20-85 (KEGYLVNKST…TYPLPNKSCS (66 aa)). 4 disulfides stabilise this stretch: C31–C84, C35–C60, C44–C65, and C48–C67. Residues 86-87 (KK) constitute a propeptide, removed by a carboxypeptidase.

It belongs to the long (4 C-C) scorpion toxin superfamily. Sodium channel inhibitor family. Beta subfamily. In terms of tissue distribution, expressed by the venom gland.

It is found in the secreted. Functionally, beta toxins bind voltage-independently at site-4 of sodium channels (Nav) and shift the voltage of activation toward more negative potentials thereby affecting sodium channel activation and promoting spontaneous and repetitive firing. This is Toxin Cll5b from Centruroides limpidus (Mexican scorpion).